We begin with the raw amino-acid sequence, 398 residues long: Arylacetamide deacetylase (398 aa).

Residues Gly1–Thr4 lie on the Cytoplasmic side of the membrane. The chain crosses the membrane as a helical; Signal-anchor for type II membrane protein span at residues Val5–Leu22. The Lumenal portion of the chain corresponds to Pro23–Val398. Asn77 carries N-linked (GlcNAc...) asparagine glycosylation. The Involved in the stabilization of the negatively charged intermediate by the formation of the oxyanion hole motif lies at His110–Gly112. A disulfide bond links Cys115 and Cys339. Residue Ser188 is part of the active site. Asn281 is a glycosylation site (N-linked (GlcNAc...) asparagine). Catalysis depends on residues Asp342 and His372.

This sequence belongs to the 'GDXG' lipolytic enzyme family. Glycosylated.

Its subcellular location is the endoplasmic reticulum membrane. The protein localises to the microsome membrane. It catalyses the reaction a triacylglycerol + H2O = a diacylglycerol + a fatty acid + H(+). Inhibited by diisopropylphosphofluoridate (DFP). Functionally, displays cellular triglyceride lipase activity in liver, increases the levels of intracellular fatty acids derived from the hydrolysis of newly formed triglyceride stores and plays a role in very low-density lipoprotein assembly. Displays serine esterase activity in liver. Deacetylates a variety of arylacetamide substrates, including xenobiotic compounds and procarcinogens, converting them to the primary arylamide compounds and increasing their toxicity. The protein is Arylacetamide deacetylase of Oryctolagus cuniculus (Rabbit).